Consider the following 544-residue polypeptide: Coiled-coil domain-containing protein 82 (544 aa).

Over residues 1–14 (MIHVRRHETRRNSK) the composition is skewed to basic residues. The interval 1–294 (MIHVRRHETR…ESDEDGDDYI (294 aa)) is disordered. The segment covering 16–27 (HVPEQKSRVDWR) has biased composition (basic and acidic residues). The span at 39 to 67 (DSDEELDSEEFDSDEELDSDESFENDEEL) shows a compositional bias: acidic residues. Ser-88, Ser-131, Ser-154, Ser-195, and Ser-219 each carry phosphoserine. A compositionally biased stretch (polar residues) spans 88–108 (SKIQSEGNDSKCLINSGNGST). Over residues 112–132 (ETNKIKHRNIDLQDQEKHLSQ) the composition is skewed to basic and acidic residues. Over residues 223 to 248 (MEQKTPEKTLAAQKREKLQKLKELSK) the composition is skewed to basic and acidic residues. At Thr-227 the chain carries Phosphothreonine. Residues 229 to 256 (EKTLAAQKREKLQKLKELSKQRSRQRRS) are a coiled coil. The segment covering 273-294 (DEVDEEEEEDNYESDEDGDDYI) has biased composition (acidic residues). Ser-329 is subject to Phosphoserine.

The polypeptide is Coiled-coil domain-containing protein 82 (CCDC82) (Homo sapiens (Human)).